The sequence spans 509 residues: T-complex protein 11-like protein 1 (509 aa).

Over residues 1 to 12 the composition is skewed to basic and acidic residues; that stretch reads MSENLDKSHVDE. Residues 1 to 57 form a disordered region; sequence MSENLDKSHVDEAGEAEAAASEQGLEGALECSDETLQKKVKSDSPSSQRVGRPHSSP. A compositionally biased stretch (low complexity) spans 16–30; it reads AEAAASEQGLEGALE. At Ser-56 the chain carries Phosphoserine.

Belongs to the TCP11 family.

This is T-complex protein 11-like protein 1 (Tcp11l1) from Mus musculus (Mouse).